Reading from the N-terminus, the 1007-residue chain is Lysosomal alpha-mannosidase (1007 aa).

Low complexity-rich tracts occupy residues M1–V10 and A19–A28. A disordered region spans residues M1–P30. The first 50 residues, M1–A50, serve as a signal peptide directing secretion. Intrachain disulfides connect C56–C360 and C269–C274. H73 and D75 together coordinate Zn(2+). An N-linked (GlcNAc...) asparagine glycan is attached at N134. Residue D197 coordinates Zn(2+). Catalysis depends on D197, which acts as the Nucleophile. N-linked (GlcNAc...) asparagine glycans are attached at residues N311, N347, and N369. 2 disulfide bridges follow: C414–C474 and C495–C503. Residue H448 coordinates Zn(2+). N-linked (GlcNAc...) asparagine glycosylation is found at N499, N543, N643, N649, N690, N764, and N927.

Belongs to the glycosyl hydrolase 38 family. Zn(2+) serves as cofactor. In terms of processing, processed into 3 peptides of 72 kDa, 41 kDa and 12 kDa.

Its subcellular location is the lysosome. The catalysed reaction is Hydrolysis of terminal, non-reducing alpha-D-mannose residues in alpha-D-mannosides.. Its function is as follows. Necessary for the catabolism of N-linked carbohydrates released during glycoprotein turnover. The polypeptide is Lysosomal alpha-mannosidase (MAN2B1) (Felis catus (Cat)).